The primary structure comprises 141 residues: ATP synthase epsilon chain (141 aa).

This sequence belongs to the ATPase epsilon chain family. As to quaternary structure, F-type ATPases have 2 components, CF(1) - the catalytic core - and CF(0) - the membrane proton channel. CF(1) has five subunits: alpha(3), beta(3), gamma(1), delta(1), epsilon(1). CF(0) has three main subunits: a, b and c.

The protein resides in the cell inner membrane. Its function is as follows. Produces ATP from ADP in the presence of a proton gradient across the membrane. The polypeptide is ATP synthase epsilon chain (Cellvibrio japonicus (strain Ueda107) (Pseudomonas fluorescens subsp. cellulosa)).